The following is a 233-amino-acid chain: Cytochrome c oxidase subunit 3 (233 aa).

Transmembrane regions (helical) follow at residues 62–82 (VVLFLVAESAIFLGLFTAYLI), 98–118 (LELLLPGVNSIILISSSFVMH), 135–155 (WFGITAAMGIIFLAGQMYEYF), and 172–192 (VLTGFHGLHVTFGLLLILSVL).

The protein belongs to the cytochrome c oxidase subunit 3 family.

The protein localises to the cell membrane. It carries out the reaction 4 Fe(II)-[cytochrome c] + O2 + 8 H(+)(in) = 4 Fe(III)-[cytochrome c] + 2 H2O + 4 H(+)(out). This Synechocystis sp. (strain ATCC 27184 / PCC 6803 / Kazusa) protein is Cytochrome c oxidase subunit 3 (ctaE).